We begin with the raw amino-acid sequence, 432 residues long: Glutamate-1-semialdehyde 2,1-aminomutase (432 aa).

Lys272 is subject to N6-(pyridoxal phosphate)lysine.

This sequence belongs to the class-III pyridoxal-phosphate-dependent aminotransferase family. HemL subfamily. Homodimer. The cofactor is pyridoxal 5'-phosphate.

Its subcellular location is the cytoplasm. The enzyme catalyses (S)-4-amino-5-oxopentanoate = 5-aminolevulinate. Its pathway is porphyrin-containing compound metabolism; protoporphyrin-IX biosynthesis; 5-aminolevulinate from L-glutamyl-tRNA(Glu): step 2/2. It participates in porphyrin-containing compound metabolism; chlorophyll biosynthesis. The polypeptide is Glutamate-1-semialdehyde 2,1-aminomutase (Picosynechococcus sp. (strain ATCC 27264 / PCC 7002 / PR-6) (Agmenellum quadruplicatum)).